We begin with the raw amino-acid sequence, 185 residues long: Elongation factor P (185 aa).

It belongs to the elongation factor P family.

It localises to the cytoplasm. The protein operates within protein biosynthesis; polypeptide chain elongation. Its function is as follows. Involved in peptide bond synthesis. Stimulates efficient translation and peptide-bond synthesis on native or reconstituted 70S ribosomes in vitro. Probably functions indirectly by altering the affinity of the ribosome for aminoacyl-tRNA, thus increasing their reactivity as acceptors for peptidyl transferase. This chain is Elongation factor P, found in Streptococcus pyogenes serotype M5 (strain Manfredo).